A 164-amino-acid polypeptide reads, in one-letter code: ATP synthase subunit b 1 (164 aa).

Residues A8 to V28 traverse the membrane as a helical segment.

This sequence belongs to the ATPase B chain family. In terms of assembly, F-type ATPases have 2 components, F(1) - the catalytic core - and F(0) - the membrane proton channel. F(1) has five subunits: alpha(3), beta(3), gamma(1), delta(1), epsilon(1). F(0) has three main subunits: a(1), b(2) and c(10-14). The alpha and beta chains form an alternating ring which encloses part of the gamma chain. F(1) is attached to F(0) by a central stalk formed by the gamma and epsilon chains, while a peripheral stalk is formed by the delta and b chains.

The protein resides in the cell inner membrane. F(1)F(0) ATP synthase produces ATP from ADP in the presence of a proton or sodium gradient. F-type ATPases consist of two structural domains, F(1) containing the extramembraneous catalytic core and F(0) containing the membrane proton channel, linked together by a central stalk and a peripheral stalk. During catalysis, ATP synthesis in the catalytic domain of F(1) is coupled via a rotary mechanism of the central stalk subunits to proton translocation. Its function is as follows. Component of the F(0) channel, it forms part of the peripheral stalk, linking F(1) to F(0). The chain is ATP synthase subunit b 1 from Rhodopseudomonas palustris (strain BisA53).